We begin with the raw amino-acid sequence, 677 residues long: Methionine--tRNA ligase (677 aa).

Residues 15 to 25 (PYANGSIHLGH) carry the 'HIGH' region motif. Cysteine 146, cysteine 149, cysteine 159, and cysteine 162 together coordinate Zn(2+). The 'KMSKS' region motif lies at 333-337 (KMSKS). Lysine 336 contributes to the ATP binding site. A tRNA-binding domain is found at 575 to 677 (DFAKVDLRVA…AGAKPGHQVK (103 aa)).

This sequence belongs to the class-I aminoacyl-tRNA synthetase family. MetG type 1 subfamily. In terms of assembly, homodimer. Zn(2+) is required as a cofactor.

Its subcellular location is the cytoplasm. It catalyses the reaction tRNA(Met) + L-methionine + ATP = L-methionyl-tRNA(Met) + AMP + diphosphate. Its function is as follows. Is required not only for elongation of protein synthesis but also for the initiation of all mRNA translation through initiator tRNA(fMet) aminoacylation. In Escherichia coli (strain ATCC 8739 / DSM 1576 / NBRC 3972 / NCIMB 8545 / WDCM 00012 / Crooks), this protein is Methionine--tRNA ligase.